A 292-amino-acid chain; its full sequence is Probable ABC transporter permease protein PH1215 (292 aa).

Transmembrane regions (helical) follow at residues 10-30, 72-92, 106-126, 160-180, 215-235, and 261-281; these read IILFLIPALILIGIFVYFAVV, LLLILLFVPGSLLLGLFLAIL, IYVLPFALSFVVTATLWAWMY, IIIALIWQFSGYTMIIYLAGI, LSAFVVLMVFSLKAFDFIWVL, and FAYGAAIATILLLMALVVVLP. The 217-residue stretch at 68–284 folds into the ABC transmembrane type-1 domain; that stretch reads LRNNLLLILL…ALVVVLPYLY (217 aa).

The protein belongs to the binding-protein-dependent transport system permease family. MalFG subfamily.

Its subcellular location is the cell membrane. Its function is as follows. Probably part of a binding-protein-dependent transport system PH1214/15/16. Probably responsible for the translocation of the substrate across the membrane. The sequence is that of Probable ABC transporter permease protein PH1215 from Pyrococcus horikoshii (strain ATCC 700860 / DSM 12428 / JCM 9974 / NBRC 100139 / OT-3).